Consider the following 435-residue polypeptide: NADH-quinone oxidoreductase subunit D (435 aa).

This sequence belongs to the complex I 49 kDa subunit family. In terms of assembly, NDH-1 is composed of 14 different subunits. Subunits NuoB, C, D, E, F, and G constitute the peripheral sector of the complex.

It is found in the cell inner membrane. The enzyme catalyses a quinone + NADH + 5 H(+)(in) = a quinol + NAD(+) + 4 H(+)(out). Functionally, NDH-1 shuttles electrons from NADH, via FMN and iron-sulfur (Fe-S) centers, to quinones in the respiratory chain. The immediate electron acceptor for the enzyme in this species is believed to be ubiquinone. Couples the redox reaction to proton translocation (for every two electrons transferred, four hydrogen ions are translocated across the cytoplasmic membrane), and thus conserves the redox energy in a proton gradient. This is NADH-quinone oxidoreductase subunit D from Xanthomonas campestris pv. campestris (strain 8004).